The following is a 582-amino-acid chain: MNKLIAWIEKGKPFFEKISRNIYLRAIRDGFIAAIPIILFSSIFILITYVPNVFGFTWSKTMEGILMKPYNYTMGIVGLLVAGTTAKSLTDSYNRKLDKTNQINFISTMMAAICGFLFLAADPVKDGGFSSAFMGTKGLLTAFISAFITVIVYNFFVKRNITIKMPKEVPPNISQVFKDIFPLSAVILILYALDLLSRAIVHTNVANAVLKVFEPLFTAADGWIGVTLIFGAFAFFWFVGIHGPSIVEPAIAAITYANLETNLHLIQAGEHADKVITPGTQMFVATMGGTGATLVVPFMFMWLTKSKRNKAIGRASVVPTFFGVNEPILFGAPLVLNPVFFIPFIFAPIVNIWIFKFFVDVLNMNSFSIFLPWTTPGPLGIVMGTGFAFWSFVLAILLIVVDVIIYYPFLKVYDEQVLEEELGNKEANNELKEKVSANFDTKKADAILATAGASEADTDDTSSVDETTSTSSTDTISEQTNVLVLCAGGGTSGLLANALNKAAEEYEVPVKAAAGGYGAHMDIMKDYQLIILAPQVASNFEDIKQDTDRLGIKLAKTEGAQYIKLTRDGEAALEFVKQQFNN.

The region spanning I8–F409 is the PTS EIIC type-3 domain. 9 helical membrane passes run G30 to V50, G64 to T84, I103 to P123, K137 to V157, V176 to L196, G222 to H242, F283 to L303, V339 to V359, and I381 to V401. The tract at residues A453 to T473 is disordered. A compositionally biased stretch (low complexity) spans V464 to T473. The PTS EIIB type-3 domain maps to Q479–N582. C486 acts as the Phosphocysteine intermediate; for EIIB activity in catalysis. Position 486 is a phosphocysteine; by EIIA (C486).

It localises to the cell membrane. It carries out the reaction lactose(out) + N(pros)-phospho-L-histidyl-[protein] = lactose 6-phosphate(in) + L-histidyl-[protein]. Functionally, the phosphoenolpyruvate-dependent sugar phosphotransferase system (sugar PTS), a major carbohydrate active transport system, catalyzes the phosphorylation of incoming sugar substrates concomitantly with their translocation across the cell membrane. The enzyme II LacEF PTS system is involved in lactose transport. The sequence is that of PTS system lactose-specific EIICB component from Staphylococcus epidermidis (strain ATCC 35984 / DSM 28319 / BCRC 17069 / CCUG 31568 / BM 3577 / RP62A).